Consider the following 300-residue polypeptide: GTPase Era (300 aa).

The region spanning 8–176 is the Era-type G domain; the sequence is RCGYVAIVGR…EKVIADHLPE (169 aa). Positions 16-23 are G1; sequence GRPNVGKS. Residue 16–23 coordinates GTP; the sequence is GRPNVGKS. The tract at residues 42 to 46 is G2; sequence QTTRH. Residues 63–66 form a G3 region; the sequence is DTPG. GTP contacts are provided by residues 63–67 and 125–128; these read DTPGM and NKTD. The interval 125 to 128 is G4; the sequence is NKTD. Positions 155–157 are G5; sequence ISA. Positions 199 to 283 constitute a KH type-2 domain; the sequence is VREKIMRQLG…MLNLWVKVKG (85 aa).

It belongs to the TRAFAC class TrmE-Era-EngA-EngB-Septin-like GTPase superfamily. Era GTPase family. Monomer.

It localises to the cytoplasm. The protein resides in the cell inner membrane. Its function is as follows. An essential GTPase that binds both GDP and GTP, with rapid nucleotide exchange. Plays a role in 16S rRNA processing and 30S ribosomal subunit biogenesis and possibly also in cell cycle regulation and energy metabolism. The protein is GTPase Era of Pseudomonas fluorescens (strain Pf0-1).